Reading from the N-terminus, the 93-residue chain is Large ribosomal subunit protein uL23cz/uL23cy (93 aa).

This sequence belongs to the universal ribosomal protein uL23 family. Part of the 50S ribosomal subunit.

Its subcellular location is the plastid. It is found in the chloroplast. In terms of biological role, binds to 23S rRNA. The protein is Large ribosomal subunit protein uL23cz/uL23cy (rpl23-A) of Cucumis sativus (Cucumber).